The primary structure comprises 579 residues: Mycobactin import ATP-binding/permease protein IrtB (579 aa).

At 1–25 (MIRTLLRLVPAEKRGAVAGYAVLTL) the chain is on the cytoplasmic side. In terms of domain architecture, ABC transmembrane type-1 spans 21–299 (AVLTLLSVLL…IADLAPALET (279 aa)). The helical transmembrane segment at 26-46 (LSVLLRAVGAVLLIPLLAALF) threads the bilayer. Topologically, residues 47–48 (SD) are periplasmic. A helical membrane pass occupies residues 49–69 (TPSDAWLWLGWLTAVTLAGWV). Topologically, residues 70–126 (TDTNTARLGFDLGFAVLSRTQHDMADRLPNVAMSWFTPDNTATARQAIAATGPELAG) are cytoplasmic. The next 2 helical transmembrane spans lie at 127 to 147 (LVVN…AIGV) and 148 to 168 (ALLF…AVLF). The Cytoplasmic segment spans residues 169 to 241 (GALALSGRLS…RLLTMQIPGQ (73 aa)). Residues 242–262 (VLFSLAGQVALIGFAGMAVWL) form a helical membrane-spanning segment. At 263-272 (TVRGQLGVPE) the chain is on the periplasmic side. A helical membrane pass occupies residues 273 to 293 (AIALIVVLVRYLEPFAAIADL). At 294-579 (APALETTRAT…SEWAIGSTAR (286 aa)) the chain is on the cytoplasmic side. The ABC transporter domain occupies 332–565 (IEFDDVRFSY…GGRFAQFWAQ (234 aa)). 364 to 371 (GPSGSGKT) serves as a coordination point for ATP.

It belongs to the ABC transporter superfamily. Siderophore-Fe(3+) uptake transporter (SIUT) (TC 3.A.1.21) family. In terms of assembly, forms a heterodimer with IrtA.

The protein resides in the cell inner membrane. The ATPase activity of IrtAB is stimulated more than 38-fold in the presence of Fe-MBT, and more than 10-fold in the presence of Fe-cMBT. Functionally, part of the ABC transporter complex IrtAB involved in the import of iron-bound mycobactin (Fe-MBT) and carboxymycobactin (Fe-cMBT). Has a preference for Fe-MBT over Fe-cMBT. Transmembrane domains (TMD) form a pore in the membrane and the ATP-binding domain (NBD) is responsible for energy generation. In Mycolicibacterium thermoresistibile (strain ATCC 19527 / DSM 44167 / CIP 105390 / JCM 6362 / NCTC 10409 / 316) (Mycobacterium thermoresistibile), this protein is Mycobactin import ATP-binding/permease protein IrtB.